Here is a 179-residue protein sequence, read N- to C-terminus: Large ribosomal subunit protein uL6 (179 aa).

Belongs to the universal ribosomal protein uL6 family. In terms of assembly, part of the 50S ribosomal subunit.

In terms of biological role, this protein binds to the 23S rRNA, and is important in its secondary structure. It is located near the subunit interface in the base of the L7/L12 stalk, and near the tRNA binding site of the peptidyltransferase center. This Finegoldia magna (strain ATCC 29328 / DSM 20472 / WAL 2508) (Peptostreptococcus magnus) protein is Large ribosomal subunit protein uL6.